Here is a 704-residue protein sequence, read N- to C-terminus: Elongation factor G (704 aa).

Residues 8-290 (ARYRNIGISA…AVIDYLPSPV (283 aa)) form the tr-type G domain. GTP contacts are provided by residues 17–24 (AHIDAGKT), 88–92 (DTPGH), and 142–145 (NKMD). N6-acetyllysine is present on residues lysine 504 and lysine 643.

It belongs to the TRAFAC class translation factor GTPase superfamily. Classic translation factor GTPase family. EF-G/EF-2 subfamily.

Its subcellular location is the cytoplasm. Catalyzes the GTP-dependent ribosomal translocation step during translation elongation. During this step, the ribosome changes from the pre-translocational (PRE) to the post-translocational (POST) state as the newly formed A-site-bound peptidyl-tRNA and P-site-bound deacylated tRNA move to the P and E sites, respectively. Catalyzes the coordinated movement of the two tRNA molecules, the mRNA and conformational changes in the ribosome. This Escherichia coli O17:K52:H18 (strain UMN026 / ExPEC) protein is Elongation factor G.